The sequence spans 183 residues: Large ribosomal subunit protein uL6 (183 aa).

This sequence belongs to the universal ribosomal protein uL6 family. As to quaternary structure, part of the 50S ribosomal subunit.

Functionally, this protein binds to the 23S rRNA, and is important in its secondary structure. It is located near the subunit interface in the base of the L7/L12 stalk, and near the tRNA binding site of the peptidyltransferase center. The polypeptide is Large ribosomal subunit protein uL6 (Chlamydia muridarum (strain MoPn / Nigg)).